The following is a 493-amino-acid chain: GTPase Der (493 aa).

Residues 3–166 (PVIALVGRPN…EALGIFPKDN (164 aa)) form the EngA-type G 1 domain. GTP is bound by residues 9-16 (GRPNVGKS), 56-60 (DTGGI), and 118-121 (NKVD). The tract at residues 166-195 (NAEEEGEGEPASEEVAEGEEPTRIPGPSEK) is disordered. Over residues 167–184 (AEEEGEGEPASEEVAEGE) the composition is skewed to acidic residues. The EngA-type G 2 domain maps to 198–371 (IKIAIIGRPN…SVQESFRSAV (174 aa)). Residues 204–211 (GRPNVGKS), 251–255 (DTAGV), and 316–319 (NKWD) contribute to the GTP site. A KH-like domain is found at 372–456 (TRWPTSRLTS…PIRIEYKGGE (85 aa)). Residues 454 to 463 (GGENPYEGKK) are compositionally biased toward basic and acidic residues. The disordered stretch occupies residues 454–493 (GGENPYEGKKNSLTARQVNKKRRLMSHHKKAEKKKKDKRR). A compositionally biased stretch (basic residues) spans 471 to 493 (VNKKRRLMSHHKKAEKKKKDKRR).

This sequence belongs to the TRAFAC class TrmE-Era-EngA-EngB-Septin-like GTPase superfamily. EngA (Der) GTPase family. As to quaternary structure, associates with the 50S ribosomal subunit.

GTPase that plays an essential role in the late steps of ribosome biogenesis. In Pseudomonas aeruginosa (strain UCBPP-PA14), this protein is GTPase Der.